The following is a 436-amino-acid chain: MATKQSVTTREGDRIAIVAGLRTPFAKMATYFHGVPAVDLGKMVVNELLVRHGVQKEWVDQVVYGQVVQMPEAPNIAREIVLGTGMNVHTDAYSVSRACATSFQSTVNIAESMMAGTVQVGIAGGADSTSVSPIGVSKNLARALVDLQKTKTLGQKLNIFKRLSLRDLAPVPPAVAEYSTGLSMGQTAEQMAKTHQISREEQDKLAHRSHSLAAESWEAGKLSSEVMTAYAEPYKAALERDNNVRFDSKLEGYAKLRPVFDKKYGSVTAANATPLTDGASAVLMMTESRAKELGYTPLGYIKSYAFAAIDVWEDMLMGPSYATPIALDRAGMTLNDLTLIEMHEAFAAQTLANVKMFASDKFAKEKLGRDKATGEIDMDKFNVMGSSIAYGHPFAATGTRMITQMLNELNRRGGGSGLLTACAAGGLGAAMIVETE.

Residue C99 is the Acyl-thioester intermediate of the active site. Active-site proton acceptor residues include H392 and C422.

This sequence belongs to the thiolase-like superfamily. Thiolase family. As to quaternary structure, heterotetramer of two alpha chains (FadJ) and two beta chains (FadI).

The protein localises to the cytoplasm. It carries out the reaction an acyl-CoA + acetyl-CoA = a 3-oxoacyl-CoA + CoA. It participates in lipid metabolism; fatty acid beta-oxidation. Its function is as follows. Catalyzes the final step of fatty acid oxidation in which acetyl-CoA is released and the CoA ester of a fatty acid two carbons shorter is formed. In Alteromonas mediterranea (strain DSM 17117 / CIP 110805 / LMG 28347 / Deep ecotype), this protein is 3-ketoacyl-CoA thiolase.